The following is a 778-amino-acid chain: Jhy protein homolog (778 aa).

Disordered regions lie at residues 62–271, 334–408, 631–654, and 721–746; these read DRIR…PKTD, QYES…LDTS, EKGK…QKRD, and IPKP…AGKE. The span at 118–139 shows a compositional bias: basic and acidic residues; the sequence is PIEDKYSDLRYDPNWKSKKEEG. The segment covering 223–234 has biased composition (low complexity); that stretch reads SSLSPYVKSSSS. Polar residues predominate over residues 334-344; sequence QYESTKSSNVP. Over residues 358 to 371 the composition is skewed to basic residues; the sequence is SRRPAKLKIRKQCK. Over residues 375 to 389 the composition is skewed to polar residues; the sequence is GLKSSTTEEVTASQG. Over residues 390–402 the composition is skewed to low complexity; that stretch reads NQNNPPRQQQNQN. The span at 633–650 shows a compositional bias: basic residues; it reads GKKHKKRSSSKNTKLKGY. Over residues 733–746 the composition is skewed to basic and acidic residues; that stretch reads ASKEQKNPTYAGKE.

In terms of biological role, required for the normal development of cilia in brain ependymal cells lining the ventricular surfaces. In Homo sapiens (Human), this protein is Jhy protein homolog.